The chain runs to 1489 residues: MAGNSLVLPIVLWGRKAPTHCISSILLTDDGGTIVTGCHDGQICLWDVSVELEVNPRALLFGHTASITCLSKACASGDKRYTVSASANGEMCLWDVNDGRCIEFTKLACTHTGIQFYQFSVGNQQEGRLLCHGHYPEILVVDATSLEVLYSLVSKISPDWISSMSIIRSQRTQEDTVVALSVTGILKVWIVTSEMSGMQDTEPIFEEESKPIYCQNCQSISFCAFTQRSLLVVCSKYWRVFDAGDYSLLCSGPSENGQTWTGGDFVSADKVIIWTENGQSYIYKLPASCLPASDSFRSDVGKAVENLIPPVQHSLLDQKDKELVICPPVTRFFYGCKEYLHKLLIQGDSSGRLNIWNIADIAEKQEADEGLKMTTCISLQEAFDKLKPCPAGIIDQLSVIPNSNEPLKVTASVYIPAHGRLVCGREDGSIIIVPATQTAIVQLLQGEHMLRRGWPPHRTLRGHRNKVTCLLYPHQVSARYDQRYLISGGVDFSVIIWDIFSGEMKHIFCVHGGEITQLLVPPENCSARVQHCICSVASDHSVGLLSLREKKCIMLASRHLFPIQVIKWRPSDDYLVVGCTDGSVYVWQMDTGALDRCAMGITAVEILNACDEAVPAAVDSLSHPAVNLKQAMTRRSLAALKNMAHHKLQTLATNLLASEASDKGNLPKYSHNSLMVQAIKTNLTDPDIHVLFFDVEALIIQLLTEEASRPNTALISPENLQKASGSSDKGGSFLTGKRAAVLFQQVKETIKENIKEHLLDEEEDEEEARRQSREDSDPEYRASKSKPLTLLEYNLTMDTAKLFMSCLHAWGLNEVLDEVCLDRLGMLKPHCTVSFGLLSRGGHMSLMLPGYNQAAGKLLHAKAEVGRKLPAAEGVGKGTYTVSRAVTTQHLLSIISLANTLMSMTNATFIGDHMKKGPTRPPRPGTPDLSKARDSPPPSSNIVQGQIKQAAAPVVSARSDADHSGSDSASPALPTCFLVNEGWSQLAAMHCVMLPDLLGLERFRPPLLEMLARRWQDRCLEVREAAQALLLAELRRIEQAGRKETIDTWAPYLPQYMDHVISPGVTAEAMQTMAAAPDASGPEAKVQEEEHDLVDDDITAGCLSSVPQMKKISTSYEERRKQATAIVLLGVIGAEFGAEIEPPKLLTRPRSSSQIPEGFGLTSGGSNYSLARHTCKALTYLLLQPPSPKLPPHSTIRRTATDLIGRGFTVWEPYMDVSAVLMGLLELCADAEKQLANITMGLPLSPAADSARSARHALSLIATARPPAFITTIAKEVHRHTALAANTQSQQSIHTTTLARAKGEILRVIEILIEKMPTDVVDLLVEVMDIIMYCLEGSLVKKKGLQECFPAICRFYMVSYYERSHRIAVGARHGSVALYDIRTGKCQTIHGHKGPITAVSFAPDGRYLATYSNTDSHISFWQMNTSLLGSIGMLNSAPQLRCIKTYQVPPVQPASPGSHNALKLARLIWTSNRNVILMAHDGKEHRFMV.

7 WD repeats span residues 17 to 56 (APTHCISSILLTDDGGTIVTGCHDGQICLWDVSVELEVNP), 62 to 104 (GHTA…CIEF), 156 to 199 (ISPD…SGMQ), 324 to 366 (VICP…EKQE), 404 to 443 (NEPLKVTASVYIPAHGRLVCGREDGSIIIVPATQTAIVQL), 462 to 507 (GHRN…MKHI), and 558 to 597 (RHLFPIQVIKWRPSDDYLVVGCTDGSVYVWQMDTGALDRC). 2 disordered regions span residues 754 to 783 (IKEHLLDEEEDEEEARRQSREDSDPEYRAS) and 911 to 947 (GDHMKKGPTRPPRPGTPDLSKARDSPPPSSNIVQGQI). Over residues 767 to 782 (EARRQSREDSDPEYRA) the composition is skewed to basic and acidic residues. The residue at position 935 (serine 935) is a Phosphoserine. 2 WD repeats span residues 1350–1389 (PAICRFYMVSYYERSHRIAVGARHGSVALYDIRTGKCQTI) and 1391–1431 (GHKG…LGSI). Serine 1455 bears the Phosphoserine mark.

The sequence is that of WD repeat-containing protein 7 (Wdr7) from Mus musculus (Mouse).